A 305-amino-acid chain; its full sequence is Protoheme IX farnesyltransferase (305 aa).

Helical transmembrane passes span 26–46 (VMSLVVFTAFVGLWIAPQPVN), 47–67 (PFVAFCAVLFIALGGGASGAL), 98–118 (LAVGIALSGLSVMMLGLAANW), 119–139 (FAAGFLAFTIFFYAVVYTIWL), 147–167 (IVIGGAAGAFPPMIGWACATG), 174–194 (LLMFALIFFWTPPHFWALALF), 220–240 (IFAYTLVLAPFALWLGFTSVG), 243–263 (LYLAVSVVLNALFIAGGWQIL), and 284–304 (LSLYYTFLHFLALLVQHWVGG).

Belongs to the UbiA prenyltransferase family. Protoheme IX farnesyltransferase subfamily. As to quaternary structure, interacts with CtaA.

It localises to the cell inner membrane. The enzyme catalyses heme b + (2E,6E)-farnesyl diphosphate + H2O = Fe(II)-heme o + diphosphate. It participates in porphyrin-containing compound metabolism; heme O biosynthesis; heme O from protoheme: step 1/1. Functionally, converts heme B (protoheme IX) to heme O by substitution of the vinyl group on carbon 2 of heme B porphyrin ring with a hydroxyethyl farnesyl side group. This Paracoccus denitrificans (strain Pd 1222) protein is Protoheme IX farnesyltransferase.